The following is an 88-amino-acid chain: MKTMHRSRSWRRKYVRTPGGRTVIHFERKKPKVAHCAMCGRPLNGIPRGRPNELRKLPKTKKRPERPMPNLCPSCMRRIMKAQARATL.

The segment at 41–72 (RPLNGIPRGRPNELRKLPKTKKRPERPMPNLC) is disordered.

This sequence belongs to the eukaryotic ribosomal protein eL34 family.

This Thermococcus sibiricus (strain DSM 12597 / MM 739) protein is Large ribosomal subunit protein eL34.